The following is a 189-amino-acid chain: MLSASENRFEIDLDLVFHSYQDAHLINNIFFNNEALWRSNLKVWIDYVRRNDNYLCPAIVRSVNCLSIGLQFTDDKSIMKINQQWRAKEEPTDVLSFPVIDQDSIAPPPNHFLELGDIIVSVQTAQKQADENNHSLDKELCWLVSHGLLHLLGWDHLNEHSLDQMLSFQDKLLQINHDSQIAVSRGLQP.

Zn(2+) contacts are provided by His146, His150, and His156.

The protein belongs to the endoribonuclease YbeY family. Requires Zn(2+) as cofactor.

The protein localises to the cytoplasm. Its function is as follows. Single strand-specific metallo-endoribonuclease involved in late-stage 70S ribosome quality control and in maturation of the 3' terminus of the 16S rRNA. The polypeptide is Endoribonuclease YbeY (Prochlorococcus marinus (strain MIT 9211)).